Reading from the N-terminus, the 117-residue chain is V-type sodium ATPase subunit F (117 aa).

The disordered stretch occupies residues 1–20 (MARILTRIKEAEENNQKKEE). A compositionally biased stretch (basic and acidic residues) spans 7–20 (RIKEAEENNQKKEE).

It belongs to the V-ATPase G subunit family.

Its function is as follows. Involved in ATP-driven sodium extrusion. This is V-type sodium ATPase subunit F (ntpF) from Enterococcus hirae (strain ATCC 9790 / DSM 20160 / JCM 8729 / LMG 6399 / NBRC 3181 / NCIMB 6459 / NCDO 1258 / NCTC 12367 / WDCM 00089 / R).